The primary structure comprises 217 residues: Zinc finger CCHC-type and RNA-binding motif-containing protein 1 (217 aa).

One can recognise an RRM domain in the interval 10-88 (STVYVSNLPF…RVIKASIAID (79 aa)). Residues 105 to 122 (SKCYECGESGHLSYACPK) form a CCHC-type zinc finger. Positions 120–217 (CPKNMLGERE…YFSDEEELSD (98 aa)) are disordered. Positions 145 to 163 (PEEEIEEVEESEDEGEDPA) are enriched in acidic residues. Phosphoserine occurs at positions 155, 210, and 216.

As to quaternary structure, component of the U11/U12 snRNPs that are part of the U12-type spliceosome. Interacts with ZRSR1.

The protein localises to the nucleus. It localises to the nucleoplasm. This is Zinc finger CCHC-type and RNA-binding motif-containing protein 1 (ZCRB1) from Bos taurus (Bovine).